We begin with the raw amino-acid sequence, 137 residues long: Large-conductance mechanosensitive channel (137 aa).

Transmembrane regions (helical) follow at residues 10–30 and 76–96; these read FAMR…AAFG and GVFL…FMAI.

It belongs to the MscL family. In terms of assembly, homopentamer.

It localises to the cell inner membrane. Its function is as follows. Channel that opens in response to stretch forces in the membrane lipid bilayer. May participate in the regulation of osmotic pressure changes within the cell. This Erwinia tasmaniensis (strain DSM 17950 / CFBP 7177 / CIP 109463 / NCPPB 4357 / Et1/99) protein is Large-conductance mechanosensitive channel.